Reading from the N-terminus, the 435-residue chain is UDP-glucuronic acid decarboxylase 1 (435 aa).

The interval 1-33 (MKQLHKQMSSKRDEETIPMSQSSPYSPKTLKHP) is disordered. Topologically, residues 1 to 48 (MKQLHKQMSSKRDEETIPMSQSSPYSPKTLKHPRSLPRSLHYLFREQR) are cytoplasmic. Residues 49-69 (LLFILVGILIGSTFFILQPSL) traverse the membrane as a helical; Signal-anchor for type II membrane protein segment. The Lumenal portion of the chain corresponds to 70-435 (SRLGAAESTS…ILNEDEGKGL (366 aa)). The segment covering 91-100 (DSPPSRSTFN) has biased composition (polar residues). The tract at residues 91–110 (DSPPSRSTFNSGGGGGRTGR) is disordered. Residues Gly129, Phe130, Val131, Asp150, Asn151, Phe153, Thr154, Gly155, Asp175, and Val176 each coordinate NAD(+). Residue Ile180 participates in UDP-alpha-D-glucuronate binding. Leu190 provides a ligand contact to NAD(+). Lys208 contributes to the UDP-alpha-D-glucuronate binding site. Thr209 serves as a coordination point for NAD(+). The UDP-alpha-D-glucuronate site is built by Asn216, Gly219, Lys222, and Arg223. Residues Tyr262 and Lys266 each coordinate NAD(+). Residue Tyr262 is the Proton acceptor of the active site. Tyr276 lines the UDP-alpha-D-glucuronate pocket. NAD(+) is bound by residues Thr292 and Arg303. A disordered region spans residues 380–401 (EFKPNTADDPHKRKPDISKAKE). Positions 385–401 (TADDPHKRKPDISKAKE) are enriched in basic and acidic residues.

Belongs to the NAD(P)-dependent epimerase/dehydratase family. UDP-glucuronic acid decarboxylase subfamily. NAD(+) serves as cofactor. As to expression, ubiquitous.

Its subcellular location is the golgi apparatus. It is found in the golgi stack membrane. It catalyses the reaction UDP-alpha-D-glucuronate + H(+) = UDP-alpha-D-xylose + CO2. It participates in nucleotide-sugar biosynthesis; UDP-alpha-D-xylose biosynthesis; UDP-alpha-D-xylose from UDP-alpha-D-glucuronate: step 1/1. Its function is as follows. Catalyzes the NAD-dependent decarboxylation of UDP-glucuronic acid to UDP-xylose. Necessary for the biosynthesis of the core tetrasaccharide in glycosaminoglycan biosynthesis. This is UDP-glucuronic acid decarboxylase 1 from Arabidopsis thaliana (Mouse-ear cress).